The following is a 429-amino-acid chain: Glutamate-1-semialdehyde 2,1-aminomutase 1 (429 aa).

Lysine 268 is modified (N6-(pyridoxal phosphate)lysine).

It belongs to the class-III pyridoxal-phosphate-dependent aminotransferase family. HemL subfamily. Homodimer. Pyridoxal 5'-phosphate is required as a cofactor.

The protein resides in the cytoplasm. The catalysed reaction is (S)-4-amino-5-oxopentanoate = 5-aminolevulinate. It functions in the pathway porphyrin-containing compound metabolism; protoporphyrin-IX biosynthesis; 5-aminolevulinate from L-glutamyl-tRNA(Glu): step 2/2. The chain is Glutamate-1-semialdehyde 2,1-aminomutase 1 from Listeria welshimeri serovar 6b (strain ATCC 35897 / DSM 20650 / CCUG 15529 / CIP 8149 / NCTC 11857 / SLCC 5334 / V8).